The following is a 151-amino-acid chain: GTP-dependent dephospho-CoA kinase (151 aa).

Positions 30, 31, 49, 51, and 104 each coordinate GTP.

This sequence belongs to the GTP-dependent DPCK family.

The enzyme catalyses 3'-dephospho-CoA + GTP = GDP + CoA + H(+). It participates in cofactor biosynthesis; coenzyme A biosynthesis. In terms of biological role, catalyzes the GTP-dependent phosphorylation of the 3'-hydroxyl group of dephosphocoenzyme A to form coenzyme A (CoA). In Cenarchaeum symbiosum (strain A), this protein is GTP-dependent dephospho-CoA kinase.